Consider the following 121-residue polypeptide: UPF0295 protein BH0952 (121 aa).

The next 2 membrane-spanning stretches (helical) occupy residues 12–32 (IRTFALSLVFLGILVMYIGIF) and 41–61 (VLAMILGFLCIIASTAVYFWI).

It belongs to the UPF0295 family.

It localises to the cell membrane. This Halalkalibacterium halodurans (strain ATCC BAA-125 / DSM 18197 / FERM 7344 / JCM 9153 / C-125) (Bacillus halodurans) protein is UPF0295 protein BH0952.